A 644-amino-acid polypeptide reads, in one-letter code: Exoribonuclease 2 (644 aa).

The RNB domain maps to 189 to 516 (REDLTALDFV…NHRLLKAVIK (328 aa)). The S1 motif domain maps to 561–643 (DTRFAAEIVD…ETRSIIARPV (83 aa)).

It belongs to the RNR ribonuclease family. RNase II subfamily.

It localises to the cytoplasm. The catalysed reaction is Exonucleolytic cleavage in the 3'- to 5'-direction to yield nucleoside 5'-phosphates.. In terms of biological role, involved in mRNA degradation. Hydrolyzes single-stranded polyribonucleotides processively in the 3' to 5' direction. The chain is Exoribonuclease 2 from Escherichia coli (strain ATCC 8739 / DSM 1576 / NBRC 3972 / NCIMB 8545 / WDCM 00012 / Crooks).